Here is a 254-residue protein sequence, read N- to C-terminus: Hydroxyacylglutathione hydrolase (254 aa).

The Zn(2+) site is built by His-53, His-55, Asp-57, His-58, His-111, Asp-128, and His-166.

The protein belongs to the metallo-beta-lactamase superfamily. Glyoxalase II family. As to quaternary structure, monomer. Zn(2+) serves as cofactor.

It catalyses the reaction an S-(2-hydroxyacyl)glutathione + H2O = a 2-hydroxy carboxylate + glutathione + H(+). The protein operates within secondary metabolite metabolism; methylglyoxal degradation; (R)-lactate from methylglyoxal: step 2/2. Thiolesterase that catalyzes the hydrolysis of S-D-lactoyl-glutathione to form glutathione and D-lactic acid. This Aeromonas salmonicida (strain A449) protein is Hydroxyacylglutathione hydrolase.